The primary structure comprises 214 residues: UPF0502 protein Acid345_3645 (214 aa).

This sequence belongs to the UPF0502 family.

The polypeptide is UPF0502 protein Acid345_3645 (Koribacter versatilis (strain Ellin345)).